The primary structure comprises 257 residues: Ras-related protein Rab-26 (257 aa).

Residues 1–53 form a disordered region; that stretch reads MSRKKTPKSKGGSVPAASTLPAAANGPRLAHPRTARPGPEAPPNGPPQSGRPS. Ser73, Gly74, Val75, Gly76, Lys77, Thr78, Cys79, Ser96, and Thr97 together coordinate GTP. Thr78 provides a ligand contact to Mg(2+). 2 short sequence motifs (switch) span residues 87 to 102 and 120 to 137; these read GAFLAGTFISTVGIDF and DTAGQERFRSVTHAYYRD. The Mg(2+) site is built by Thr97 and Asp120. GTP contacts are provided by Gly123, Asn178, Lys179, Asp181, Ala209, and Lys210. 2 S-geranylgeranyl cysteine lipidation sites follow: Cys254 and Cys255.

It belongs to the small GTPase superfamily. Rab family. In terms of assembly, interacts with ADRA2B. Interacts with RIMS1. Mg(2+) serves as cofactor. As to expression, expressed in pancreas, kidney, brain, submandibular gland, and lung.

The protein resides in the cytoplasmic vesicle. The protein localises to the secretory vesicle membrane. It localises to the golgi apparatus membrane. It carries out the reaction GTP + H2O = GDP + phosphate + H(+). Its activity is regulated as follows. Regulated by guanine nucleotide exchange factors (GEFs) which promote the exchange of bound GDP for free GTP. Regulated by GTPase activating proteins (GAPs) which increase the GTP hydrolysis activity. Inhibited by GDP dissociation inhibitors (GDIs). The small GTPases Rab are key regulators of intracellular membrane trafficking, from the formation of transport vesicles to their fusion with membranes. Rabs cycle between an inactive GDP-bound form and an active GTP-bound form that is able to recruit to membranes different set of downstream effectors directly responsible for vesicle formation, movement, tethering and fusion. RAB26 mediates transport of ADRA2A and ADRA2B from the Golgi to the cell membrane. Plays a role in the maturation of zymogenic granules and in pepsinogen secretion in the stomach. Plays a role in the secretion of amylase from acinar granules in the parotid gland. The polypeptide is Ras-related protein Rab-26 (Rattus norvegicus (Rat)).